We begin with the raw amino-acid sequence, 261 residues long: ClpXP adapter protein SpxH (261 aa).

The protein belongs to the SpxH family. Interacts with Spx.

It is found in the cytoplasm. Its function is as follows. Adapter protein required for efficient degradation of Spx by ClpXP under non-stress conditions. Interaction with Spx stabilizes Spx and exposes the C-terminus of Spx for recognition and proteolysis by ClpXP. The polypeptide is ClpXP adapter protein SpxH (Staphylococcus aureus).